The primary structure comprises 301 residues: Protoheme IX farnesyltransferase (301 aa).

9 consecutive transmembrane segments (helical) span residues 16–36 (VVAL…PGMP), 41–61 (IQSG…AAAI), 93–113 (VFAG…VNLI), 114–134 (TAVL…VYLK), 141–161 (IVIG…AVTG), 172–192 (SLLV…LAIF), 217–237 (QILL…ATGM), 238–258 (SGVF…WYAW), and 273–293 (FGYS…DHWL).

Belongs to the UbiA prenyltransferase family. Protoheme IX farnesyltransferase subfamily.

The protein localises to the cell inner membrane. The catalysed reaction is heme b + (2E,6E)-farnesyl diphosphate + H2O = Fe(II)-heme o + diphosphate. It participates in porphyrin-containing compound metabolism; heme O biosynthesis; heme O from protoheme: step 1/1. In terms of biological role, converts heme B (protoheme IX) to heme O by substitution of the vinyl group on carbon 2 of heme B porphyrin ring with a hydroxyethyl farnesyl side group. In Xylella fastidiosa (strain Temecula1 / ATCC 700964), this protein is Protoheme IX farnesyltransferase.